The sequence spans 254 residues: DNA-3-methyladenine glycosylase (254 aa).

A compositionally biased stretch (basic residues) spans 1–10 (MKTPARRSKR). Positions 1–20 (MKTPARRSKRVNQEESETNV) are disordered.

The protein belongs to the DNA glycosylase MPG family.

The protein localises to the nucleus. The catalysed reaction is Hydrolysis of alkylated DNA, releasing 3-methyladenine, 3-methylguanine, 7-methylguanine and 7-methyladenine.. In terms of biological role, hydrolysis of the deoxyribose N-glycosidic bond to excise 3-methyladenine, and 7-methylguanine from the damaged DNA polymer formed by alkylation lesions. In Arabidopsis thaliana (Mouse-ear cress), this protein is DNA-3-methyladenine glycosylase (MAG).